A 323-amino-acid chain; its full sequence is Glyoxylate/hydroxypyruvate reductase HPR3 (323 aa).

NADP(+) contacts are provided by residues 160–163 (LGSI), 182–184 (SRS), and 238–240 (VGR). Active-site residues include Arg240 and Glu269. The active-site Proton donor is His287. 287–289 (HFA) contacts NADP(+).

It belongs to the D-isomer specific 2-hydroxyacid dehydrogenase family. GyaR subfamily. As to quaternary structure, homodimer.

The enzyme catalyses glycolate + NADP(+) = glyoxylate + NADPH + H(+). The catalysed reaction is (R)-glycerate + NADP(+) = 3-hydroxypyruvate + NADPH + H(+). Its activity is regulated as follows. Inhibited by oxalate. In terms of biological role, catalyzes the NADPH-dependent reduction of glyoxylate and hydroxypyruvate (HP) into glycolate and glycerate. Mostly active in the presence of NADPH and glyoxylate. The protein is Glyoxylate/hydroxypyruvate reductase HPR3 (HPR3) of Arabidopsis thaliana (Mouse-ear cress).